The primary structure comprises 278 residues: uncharacterized protein (278 aa).

The signal sequence occupies residues 1–20 (MSPLIVGTLIIILLSGLATA). Gly96 is lipidated: GPI-anchor amidated glycine. Positions 97–278 (TFLTSPTAKR…QLIMQTFNGS (182 aa)) are cleaved as a propeptide — removed in mature form.

Its subcellular location is the cell membrane. This is an uncharacterized protein from Schizosaccharomyces pombe (strain 972 / ATCC 24843) (Fission yeast).